The primary structure comprises 606 residues: MTDAPVSRIRNFCIIAHIDHGKSTLADRLLQDTGTVANRDMQEQFLDNMDLERERGITIKLQAARMNYTATDGQQYVLNLIDTPGHVDFSYEVSRSLQACEGALLVVDASQGVEAQTLANVYLALDNDLEIIPVLNKIDLPGADPDRIKEEVEAIIGLDCDNAIPCSAKTGLGVPEILQAVVDRVPPPKDALEEPTKALIFDSYYDPYRGVIVYFRVMSGRISCKDKVLLMASKKTYELDEIGIMAPDQKKVDELHAGEVGYLAASIKAVADARVGDTITLLSAPADEALPGYTEAKPMVFCGLFPTEADQYPDLRDALDKLQLSDAALKYEPETSSAMGFGFRCGFLGLLHMEIVQERLEREYDLDLIVTAPSVIYKVNMIDGSEVMVDNPATLPDPQKRESIEEPYVKMEIYAPNEYNGALMGLCQERRGEYIDMKYITTDRVTLIYELPLAEVVTDFFDQMKTRTQGYASMEYSLIGYRKNQLVRLDVLINGERADALTTIVHQDKAYNVGKALVEKLKELIPRQQFKIPIQASIGSRIIASTSISAIRKDVLAKCYGGDISRKKKLLKKQAKGKKRMKAMGKVDVPQEAFMAVLKLNDGGGS.

The tr-type G domain occupies 7-189; it reads SRIRNFCIIA…AVVDRVPPPK (183 aa). GTP-binding positions include 19–24 and 136–139; these read DHGKST and NKID.

This sequence belongs to the TRAFAC class translation factor GTPase superfamily. Classic translation factor GTPase family. LepA subfamily.

It localises to the cell inner membrane. It carries out the reaction GTP + H2O = GDP + phosphate + H(+). Functionally, required for accurate and efficient protein synthesis under certain stress conditions. May act as a fidelity factor of the translation reaction, by catalyzing a one-codon backward translocation of tRNAs on improperly translocated ribosomes. Back-translocation proceeds from a post-translocation (POST) complex to a pre-translocation (PRE) complex, thus giving elongation factor G a second chance to translocate the tRNAs correctly. Binds to ribosomes in a GTP-dependent manner. The sequence is that of Elongation factor 4 from Parasynechococcus marenigrum (strain WH8102).